Here is a 491-residue protein sequence, read N- to C-terminus: Sucrose transport protein SUC7 (491 aa).

Basic and acidic residues predominate over residues 1-13 (MSDLQANKDETTV). The interval 1–25 (MSDLQANKDETTVDRQSSSSVDLDG) is disordered. Residues 1–32 (MSDLQANKDETTVDRQSSSSVDLDGPSPLRKM) are Cytoplasmic-facing. Ser-17 is subject to Phosphoserine. A helical membrane pass occupies residues 33–53 (ISVASIAAGIQFGWALQLSLL). At 54-67 (TPYVQLLGVPHKWP) the chain is on the extracellular side. Residues 68-88 (SFIWLCGPVSGLLVQPSVGYF) form a helical membrane-spanning segment. Topologically, residues 89-100 (SDRCTSRFGRRR) are cytoplasmic. The helical transmembrane segment at 101–121 (PFIATGALLVAVSVVLIGYAA) threads the bilayer. At 122 to 138 (DFGHSMGDKIDKPVKMR) the chain is on the extracellular side. The helical transmembrane segment at 139 to 159 (AVVIFALGFWILDVANNTLQG) threads the bilayer. The Cytoplasmic segment spans residues 160–180 (PCRAFLGDLAAGDAQKTRTAN). The chain crosses the membrane as a helical span at residues 181–201 (AFFSFFMAVGNVLGYAAGSYT). Topologically, residues 202–223 (NLYKIFPFTMTKACDIYCANLK) are extracellular. Residues 224–244 (SCFFLSITLLLVVTIIALWYV) traverse the membrane as a helical segment. The Cytoplasmic segment spans residues 245–276 (EDKQWSPKADSDNEKTPFFGEIFGAFKVMKRP). A helical transmembrane segment spans residues 277–297 (MWMLLIVTALNWIAWFPFLLY). Residues 298-323 (DTDWMGREVYGGDSKGDDKMKKLYNQ) are Extracellular-facing. A helical transmembrane segment spans residues 324–344 (GIHVGALGLMLNSIVLGVMSL). Topologically, residues 345–358 (GIEGISRKMGGAKR) are cytoplasmic. A helical transmembrane segment spans residues 359–379 (LWGAVNIILAVCLAMTVLVTK). At 380-402 (KAEEHRRIAGPMALPTDGIRAGA) the chain is on the extracellular side. Residues 403 to 423 (LTLFALLGIPLAITFSIPFAL) form a helical membrane-spanning segment. Residues 424 to 443 (ASIISSSSGAGQRLSLGVLN) are Cytoplasmic-facing. A helical membrane pass occupies residues 444–464 (MAIVIPQMIVSFGVGPIDALF). The Extracellular portion of the chain corresponds to 465 to 468 (GDGN). The helical transmembrane segment at 469–489 (LPGFVVGAIAAAVSSIVAFTV) threads the bilayer. Residues 490–491 (LP) are Cytoplasmic-facing.

The protein belongs to the glycoside-pentoside-hexuronide (GPH) cation symporter transporter (TC 2.A.2.4) family. In terms of tissue distribution, expressed in anthers.

It is found in the cell membrane. The protein operates within glycan biosynthesis; sucrose metabolism. In terms of biological role, may be responsible for the transport of glucosides into the cell, with the concomitant uptake of protons (symport system). Does not seem to transport sucrose. This Arabidopsis thaliana (Mouse-ear cress) protein is Sucrose transport protein SUC7.